A 195-amino-acid chain; its full sequence is Cholesin (195 aa).

Residues 1–78 (MAKHKRKGLE…KEEKKRLREA (78 aa)) form a disordered region. Basic and acidic residues-rich tracts occupy residues 8-18 (GLEGTGKESKR) and 26-39 (ETPR…DKET). Phosphoserine occurs at positions 41, 48, and 52. Positions 53 to 77 (PEERRVLERKLKKERKKEEKKRLRE) are enriched in basic and acidic residues. A Phosphoserine modification is found at Ser96.

As to expression, secreted via exosomes, secreted from the instestine, secretion is induced by feeding and cholesterol absorption. Expressed in enterocytes.

The protein resides in the secreted. Its function is as follows. Hormone secreted from the intestine in response to cholesterol, where it acts to inhibit cholesterol synthesis in the liver and VLDL secretion,leading to a reduction in circulating cholesterol levels. Acts through binding to its receptor, GPR146. The polypeptide is Cholesin (Chlsn) (Mus musculus (Mouse)).